The sequence spans 157 residues: uncharacterized protein (157 aa).

Residues 36 to 63 (QIEELNELCQFFNISLTYTRESLEELEN) adopt a coiled-coil conformation.

This is an uncharacterized protein from Bacillus subtilis (strain 168).